Here is a 244-residue protein sequence, read N- to C-terminus: Small ribosomal subunit protein uS2 (244 aa).

The protein belongs to the universal ribosomal protein uS2 family.

In Buchnera aphidicola subsp. Schizaphis graminum (strain Sg), this protein is Small ribosomal subunit protein uS2.